Consider the following 460-residue polypeptide: MSTTTVTNHTDTIVALASPQGIGAIGVIRLSGPQAFDITSSVFPSKNIAAVPTHTVHVGNIEDEGRILDEVVVTVFKGPKSFTKEDVVEISCHGSTFIVKELLQLLLRKGARHAKPGEFTMRAFLNGRFDLAQAEAVADLISSDSHASHQVALQQMRGGFSDEIRKLREQLIHFASMVELELDFSEEDVEFADRTQLRKLIHEIKRVIDRLIHSFSLGNVIKNGVPTVIIGKPNAGKSTLLNTLLNEEKAIVSEIAGTTRDFIEDELNVEGITFRFIDTAGLREATDAIEAMGVKRTREKMTQASLVIYLFDVKSTSERELIRDLEELKALKAPFLVVGNKIDKREDAIITTFRNIDGIIYISAKQNIGIEELKQNLLEIIQYESFKQNDTLVTNMRHYESLRETRKALDEVLTGMDSQVPGDLLAQDIRQSLFHLGEITGDISTDDLLDNIFSKFCIGK.

Residues Arg-29, Glu-89, and Arg-128 each coordinate (6S)-5-formyl-5,6,7,8-tetrahydrofolate. The 159-residue stretch at 224–382 (GVPTVIIGKP…LKQNLLEIIQ (159 aa)) folds into the TrmE-type G domain. A K(+)-binding site is contributed by Asn-234. GTP is bound by residues 234 to 239 (NAGKST), 253 to 259 (SEIAGTT), and 278 to 281 (DTAG). Residue Ser-238 coordinates Mg(2+). 3 residues coordinate K(+): Ser-253, Ile-255, and Thr-258. Residue Thr-259 participates in Mg(2+) binding. Lys-460 is a (6S)-5-formyl-5,6,7,8-tetrahydrofolate binding site.

Belongs to the TRAFAC class TrmE-Era-EngA-EngB-Septin-like GTPase superfamily. TrmE GTPase family. Homodimer. Heterotetramer of two MnmE and two MnmG subunits. It depends on K(+) as a cofactor.

It localises to the cytoplasm. Functionally, exhibits a very high intrinsic GTPase hydrolysis rate. Involved in the addition of a carboxymethylaminomethyl (cmnm) group at the wobble position (U34) of certain tRNAs, forming tRNA-cmnm(5)s(2)U34. In Cytophaga hutchinsonii (strain ATCC 33406 / DSM 1761 / CIP 103989 / NBRC 15051 / NCIMB 9469 / D465), this protein is tRNA modification GTPase MnmE.